A 331-amino-acid polypeptide reads, in one-letter code: UPF0324 membrane protein SA0329 (331 aa).

11 helical membrane-spanning segments follow: residues 9 to 26, 31 to 48, 69 to 88, 93 to 115, 122 to 144, 154 to 176, 183 to 202, 217 to 234, 247 to 269, 273 to 295, and 308 to 330; these read FMIG…SFLA, ILDK…AILY, LLRF…DIIG, LLAI…NKLL, ALLL…APIF, SIGI…YAIF, YGAW…LAGG, LGRV…ILIM, ISIP…VTIP, LNIL…GLNV, and LMTI…HWLY.

The protein belongs to the UPF0324 family.

It is found in the cell membrane. In Staphylococcus aureus (strain N315), this protein is UPF0324 membrane protein SA0329.